The chain runs to 444 residues: Tol-Pal system protein TolB (444 aa).

Residues 1–19 (MRNIIYFILSLLFSVTSYA) form the signal peptide.

Belongs to the TolB family. The Tol-Pal system is composed of five core proteins: the inner membrane proteins TolA, TolQ and TolR, the periplasmic protein TolB and the outer membrane protein Pal. They form a network linking the inner and outer membranes and the peptidoglycan layer.

The protein resides in the periplasm. Functionally, part of the Tol-Pal system, which plays a role in outer membrane invagination during cell division and is important for maintaining outer membrane integrity. The polypeptide is Tol-Pal system protein TolB (Rickettsia rickettsii (strain Sheila Smith)).